The following is a 965-amino-acid chain: Probable serine/threonine-protein kinase DDB_G0291516 (965 aa).

Residues 114–170 (KDSQKELLPSPQQLTPPTSLPSLPLLPLPQAPEQNEEQQLTQPPSPPSIPPPPPQKK) are disordered. Composition is skewed to low complexity over residues 119–136 (ELLP…LPSL) and 144–155 (APEQNEEQQLTQ). Residues 156-168 (PPSPPSIPPPPPQ) are compositionally biased toward pro residues. 2 ANK repeats span residues 271 to 301 (KGET…HMGI) and 310 to 339 (LNKN…PLKM). The Protein kinase domain occupies 459–739 (IDFHTQIGSA…NVKAIKKEFL (281 aa)). ATP-binding positions include 465–473 (IGSAGNASV) and Lys486. Catalysis depends on Asp587, which acts as the Proton acceptor. Residues 653 to 673 (IYSLGIILWELVCVAMTGTYI) traverse the membrane as a helical segment. Residues Asn760, Asn765, Asn905, Asn909, Asn910, Asn914, Asn934, and Asn938 are each glycosylated (N-linked (GlcNAc...) asparagine). The span at 881 to 940 (NINKNKNNNNNNNNNNNNNNNINNNNTFNNSTNNNSNDNINIPYDFNNNNNNNNNSCNNS) shows a compositional bias: low complexity. A disordered region spans residues 881 to 942 (NINKNKNNNN…NNNSCNNSKK (62 aa)).

Belongs to the protein kinase superfamily. Ser/Thr protein kinase family.

Its subcellular location is the membrane. It carries out the reaction L-seryl-[protein] + ATP = O-phospho-L-seryl-[protein] + ADP + H(+). The enzyme catalyses L-threonyl-[protein] + ATP = O-phospho-L-threonyl-[protein] + ADP + H(+). In Dictyostelium discoideum (Social amoeba), this protein is Probable serine/threonine-protein kinase DDB_G0291516.